The primary structure comprises 135 residues: uncharacterized protein (135 aa).

A coiled-coil region spans residues 68 to 135 (DEVDNYIRVF…KKESEDEDEL (68 aa)). Residues 88–135 (EKIVGKPPKSTSAPDIDELEEEPDEETEEKSEEKTEKKKKESEDEDEL) form a disordered region. Over residues 102 to 117 (DIDELEEEPDEETEEK) the composition is skewed to acidic residues. The segment covering 118–129 (SEEKTEKKKKES) has biased composition (basic and acidic residues).

This is an uncharacterized protein from Acidianus hospitalis (AFV-1).